Here is a 668-residue protein sequence, read N- to C-terminus: MAVLTHNEASQKVDELRKKLDKWADDYYAKDAPVVEDAVYDKTYQELVELEEQFPDLVTADSITQRVGGEIKSDLSKVEHPVPMLSMGDVFSKDELKEFDERITKLVGHSVAYNVELKIDGLSLSLEYTDGKLTRASTRGNGRVGEDVTANAKFIKDIPQTLPEPLTTEVRGECYMEKEAFATLNAERDEKGEQVFANPRNAAAGSLRQLDARITKKRNLSTFIYTWVNPPRNITSQHQAIDEMNRLGFHTNQSGRRFESMDEVFKFIDEYTAKRNDLSYGIDGIVLKVDDLSLQNELGNTVKVPRWEIAYKFPPEEQETVVRNIEWTVGRTGVVTPTAVMDPVKLAGTIVSRASLHNPDYLREKGVRIGDTVKLHKAGDIIPEISSVVLSKRPKDSKPYEIPNVCPSCGETLVHLQDEVALRCINPMCPAQIEEGIIHFASRGAMNIMGLGPRIVKQLIDKGFINDVADLYQLTPDQLGQLDHFKEKSITNLLSSIENSKQNSAELLLYGLGIDHVGAKAARLILEKYKNLEKVSQLTVPELTSIDTIGETIAESLTAYFNQPSAQKLLQELRDSGLNMEYLGTVEEEAPDNFFKEKTVVLTGKLSAFTRSEFTKKLQDLGAKVTGSVSKKTDYLIYGADAGSKKDKAEKLQVPMLTEQEAIAKIEK.

Residues 37–41 (DAVYD), 86–87 (SM), and glutamate 116 each bind NAD(+). The active-site N6-AMP-lysine intermediate is lysine 118. Positions 139, 173, 288, and 312 each coordinate NAD(+). Zn(2+) contacts are provided by cysteine 406, cysteine 409, cysteine 424, and cysteine 429. The region spanning 590–668 (APDNFFKEKT…EQEAIAKIEK (79 aa)) is the BRCT domain.

It belongs to the NAD-dependent DNA ligase family. LigA subfamily. The cofactor is Mg(2+). It depends on Mn(2+) as a cofactor.

The enzyme catalyses NAD(+) + (deoxyribonucleotide)n-3'-hydroxyl + 5'-phospho-(deoxyribonucleotide)m = (deoxyribonucleotide)n+m + AMP + beta-nicotinamide D-nucleotide.. Functionally, DNA ligase that catalyzes the formation of phosphodiester linkages between 5'-phosphoryl and 3'-hydroxyl groups in double-stranded DNA using NAD as a coenzyme and as the energy source for the reaction. It is essential for DNA replication and repair of damaged DNA. This is DNA ligase from Lactobacillus johnsonii (strain CNCM I-12250 / La1 / NCC 533).